Reading from the N-terminus, the 637-residue chain is 1-deoxy-D-xylulose-5-phosphate synthase 1 (637 aa).

Thiamine diphosphate contacts are provided by residues H74 and 115–117 (GHS). Mg(2+) is bound at residue D146. Thiamine diphosphate contacts are provided by residues 147–148 (GS), N175, Y286, and E368. N175 is a Mg(2+) binding site.

The protein belongs to the transketolase family. DXPS subfamily. In terms of assembly, homodimer. The cofactor is Mg(2+). Thiamine diphosphate is required as a cofactor.

It catalyses the reaction D-glyceraldehyde 3-phosphate + pyruvate + H(+) = 1-deoxy-D-xylulose 5-phosphate + CO2. It participates in metabolic intermediate biosynthesis; 1-deoxy-D-xylulose 5-phosphate biosynthesis; 1-deoxy-D-xylulose 5-phosphate from D-glyceraldehyde 3-phosphate and pyruvate: step 1/1. Functionally, catalyzes the acyloin condensation reaction between C atoms 2 and 3 of pyruvate and glyceraldehyde 3-phosphate to yield 1-deoxy-D-xylulose-5-phosphate (DXP). This is 1-deoxy-D-xylulose-5-phosphate synthase 1 from Geobacter sulfurreducens (strain ATCC 51573 / DSM 12127 / PCA).